The chain runs to 603 residues: UvrABC system protein C (603 aa).

The GIY-YIG domain occupies 15–92; that stretch reads DKPGCYLMKN…IQKHQPYFNI (78 aa). Residues 197-232 enclose the UVR domain; sequence ATVKRQLTKKMQRAAENMEFERAAEIRDQLHYIEVT.

It belongs to the UvrC family. As to quaternary structure, interacts with UvrB in an incision complex.

It localises to the cytoplasm. The UvrABC repair system catalyzes the recognition and processing of DNA lesions. UvrC both incises the 5' and 3' sides of the lesion. The N-terminal half is responsible for the 3' incision and the C-terminal half is responsible for the 5' incision. This chain is UvrABC system protein C, found in Limosilactobacillus reuteri (strain DSM 20016) (Lactobacillus reuteri).